The primary structure comprises 500 residues: Probable cytosol aminopeptidase (500 aa).

Residues Lys274 and Asp279 each coordinate Mn(2+). Residue Lys286 is part of the active site. Residues Asp297, Asp356, and Glu358 each coordinate Mn(2+). Residue Arg360 is part of the active site.

It belongs to the peptidase M17 family. Mn(2+) is required as a cofactor.

It is found in the cytoplasm. It catalyses the reaction Release of an N-terminal amino acid, Xaa-|-Yaa-, in which Xaa is preferably Leu, but may be other amino acids including Pro although not Arg or Lys, and Yaa may be Pro. Amino acid amides and methyl esters are also readily hydrolyzed, but rates on arylamides are exceedingly low.. It carries out the reaction Release of an N-terminal amino acid, preferentially leucine, but not glutamic or aspartic acids.. Functionally, presumably involved in the processing and regular turnover of intracellular proteins. Catalyzes the removal of unsubstituted N-terminal amino acids from various peptides. This is Probable cytosol aminopeptidase from Saccharophagus degradans (strain 2-40 / ATCC 43961 / DSM 17024).